The sequence spans 456 residues: Esterase MT1326 (456 aa).

LysM domains are found at residues 3–50, 54–101, and 105–152; these read STHA…RLIM, TRYT…RLIM, and TRYT…VLVI. Catalysis depends on residues serine 294, aspartate 391, and histidine 425.

Belongs to the AB hydrolase superfamily.

It is found in the secreted. The protein localises to the cell wall. The enzyme catalyses a fatty acid ester + H2O = an aliphatic alcohol + a fatty acid + H(+). Its function is as follows. Exhibits lipolytic activity with medium chain length esters as optimum substrates. The chain is Esterase MT1326 from Mycobacterium tuberculosis (strain CDC 1551 / Oshkosh).